Reading from the N-terminus, the 515-residue chain is 2,3-bisphosphoglycerate-independent phosphoglycerate mutase (515 aa).

2 residues coordinate Mn(2+): aspartate 14 and serine 64. Catalysis depends on serine 64, which acts as the Phosphoserine intermediate. Substrate is bound by residues histidine 125, 155-156 (RD), arginine 187, arginine 193, 263-266 (RADR), and lysine 337. The Mn(2+) site is built by aspartate 404, histidine 408, aspartate 445, histidine 446, and histidine 464.

It belongs to the BPG-independent phosphoglycerate mutase family. In terms of assembly, monomer. Mn(2+) serves as cofactor.

The catalysed reaction is (2R)-2-phosphoglycerate = (2R)-3-phosphoglycerate. Its pathway is carbohydrate degradation; glycolysis; pyruvate from D-glyceraldehyde 3-phosphate: step 3/5. Its function is as follows. Catalyzes the interconversion of 2-phosphoglycerate and 3-phosphoglycerate. The protein is 2,3-bisphosphoglycerate-independent phosphoglycerate mutase of Cronobacter sakazakii (strain ATCC BAA-894) (Enterobacter sakazakii).